The following is a 396-amino-acid chain: Peptide chain release factor 1, mitochondrial (396 aa).

Position 268 is an N5-methylglutamine (glutamine 268). A disordered region spans residues 317–340 (LEKEEKERNARKDQVSTTDRSDKI).

This sequence belongs to the prokaryotic/mitochondrial release factor family. Methylation of glutamine in the GGQ triplet is conserved from bacteria to mammals.

Its subcellular location is the mitochondrion. Functionally, mitochondrial peptide chain release factor that directs the termination of translation in response to the peptide chain termination codons UAA and UAG. This Kluyveromyces lactis (strain ATCC 8585 / CBS 2359 / DSM 70799 / NBRC 1267 / NRRL Y-1140 / WM37) (Yeast) protein is Peptide chain release factor 1, mitochondrial (MRF1).